Consider the following 705-residue polypeptide: Lethal(3)malignant brain tumor-like protein 2 (705 aa).

A disordered region spans residues 1–84; sequence MEKPPSIEET…GTPRSLDGSG (84 aa). Position 13 is a phosphoserine (serine 13). Positions 15 to 25 are enriched in acidic residues; sequence PMEEEEDDDLE. Over residues 38–49 the composition is skewed to low complexity; the sequence is SSVGSESSSYLE. Residues 50–60 show a composition bias toward acidic residues; the sequence is ESSEAENEDRE. Serine 67 carries the phosphoserine modification. Threonine 76 carries the phosphothreonine modification. The FCS-type zinc finger occupies 81-116; the sequence is DGSGSEPAVCEMCGIVGTREAFFSKTKRFCSVSCSR. Residues cysteine 90, cysteine 93, cysteine 110, and cysteine 114 each contribute to the Zn(2+) site. 4 MBT repeats span residues 179–283, 291–391, 397–500, and 508–604; these read FDWG…LVPP, TDWK…IKMS, MAHH…LTPP, and FNWE…LQPP. Serine 338 bears the Phosphoserine mark. Residue lysine 405 forms a Glycyl lysine isopeptide (Lys-Gly) (interchain with G-Cter in SUMO2) linkage. A disordered region spans residues 608-705; the sequence is EPATPLKAKE…VENIKQETDD (98 aa). A compositionally biased stretch (basic residues) spans 619–634; it reads TKKKKKQFGKKRKRIP. Residues lysine 647, lysine 659, and lysine 675 each participate in a glycyl lysine isopeptide (Lys-Gly) (interchain with G-Cter in SUMO2) cross-link. Serine 683, serine 688, and serine 689 each carry phosphoserine. Residue lysine 700 forms a Glycyl lysine isopeptide (Lys-Gly) (interchain with G-Cter in SUMO1); alternate linkage. A Glycyl lysine isopeptide (Lys-Gly) (interchain with G-Cter in SUMO2); alternate cross-link involves residue lysine 700.

Part of the E2F6.com-1 complex in G0 phase composed of E2F6, MGA, MAX, TFDP1, CBX3, BAT8, EUHMTASE1, RING1, RNF2, MBLR, BAT8 and YAF2.

Its subcellular location is the nucleus. Functionally, putative Polycomb group (PcG) protein. PcG proteins maintain the transcriptionally repressive state of genes, probably via a modification of chromatin, rendering it heritably changed in its expressibility. Its association with a chromatin-remodeling complex suggests that it may contribute to prevent expression of genes that trigger the cell into mitosis. Binds to monomethylated and dimethylated 'Lys-20' on histone H4. Binds histone H3 peptides that are monomethylated or dimethylated on 'Lys-4', 'Lys-9' or 'Lys-27'. The sequence is that of Lethal(3)malignant brain tumor-like protein 2 (L3MBTL2) from Pongo abelii (Sumatran orangutan).